The primary structure comprises 143 residues: Anti-sigma F factor (143 aa).

The protein belongs to the anti-sigma-factor family.

It carries out the reaction L-seryl-[protein] + ATP = O-phospho-L-seryl-[protein] + ADP + H(+). The enzyme catalyses L-threonyl-[protein] + ATP = O-phospho-L-threonyl-[protein] + ADP + H(+). Functionally, binds to sigma F and blocks its ability to form an RNA polymerase holoenzyme (E-sigma F). Phosphorylates SpoIIAA on a serine residue. This phosphorylation may enable SpoIIAA to act as an anti-anti-sigma factor that counteracts SpoIIAB and thus releases sigma F from inhibition. This chain is Anti-sigma F factor, found in Clostridium botulinum (strain Eklund 17B / Type B).